The sequence spans 299 residues: YjeF N-terminal domain-containing protein 3 (299 aa).

The 214-residue stretch at 74–287 (AAALERELLE…DVRRKFALRL (214 aa)) folds into the YjeF N-terminal domain.

Interacts with APOA1. Binds to HDL. As to expression, expressed in theca cells in ovary and in Leydig cells in testis (at protein level). Also expressed in brain and mammary gland.

Its function is as follows. May accelerate cholesterol efflux from endothelial cells to high-density lipoprotein (HDL) and thereby regulates angiogenesis. May orchestrate hematopoietic stem and progenitor cell emergence from the hemogenic endothelium, a type of specialized endothelium manifesting hematopoietic potential. YJEFN3-mediated cholesterol efflux activates endothelial SREBF2, the master transcription factor for cholesterol biosynthesis, which in turn transactivates NOTCH and promotes hematopoietic stem and progenitor cell emergence. May play a role in spermiogenesis and oogenesis. This chain is YjeF N-terminal domain-containing protein 3 (YJEFN3), found in Homo sapiens (Human).